The following is a 394-amino-acid chain: Elongation factor Tu (394 aa).

One can recognise a tr-type G domain in the interval 10–204 (KTHLNVGTIG…TLDTYIEDPV (195 aa)). Positions 19-26 (GHVDHGKT) are G1. 19-26 (GHVDHGKT) provides a ligand contact to GTP. Residue threonine 26 coordinates Mg(2+). A G2 region spans residues 60-64 (GITIK). Residues 81 to 84 (DCPG) are G3. Residues 81-85 (DCPGH) and 136-139 (NKCD) contribute to the GTP site. The segment at 136 to 139 (NKCD) is G4. The tract at residues 174-176 (SAL) is G5.

This sequence belongs to the TRAFAC class translation factor GTPase superfamily. Classic translation factor GTPase family. EF-Tu/EF-1A subfamily. As to quaternary structure, monomer.

The protein resides in the cytoplasm. It carries out the reaction GTP + H2O = GDP + phosphate + H(+). Functionally, GTP hydrolase that promotes the GTP-dependent binding of aminoacyl-tRNA to the A-site of ribosomes during protein biosynthesis. The chain is Elongation factor Tu from Aster yellows witches'-broom phytoplasma (strain AYWB).